The primary structure comprises 316 residues: Olfactory receptor 4N4C (316 aa).

The Cytoplasmic portion of the chain corresponds to 1–26 (MKIANNTVVTEFILLGLTQSQDIQLL). The chain crosses the membrane as a helical span at residues 27–47 (VFVLILIFYLIILPGNFLIIF). The Extracellular segment spans residues 48-56 (TIRSDPGLT). A helical transmembrane segment spans residues 57–77 (APLYLFLGNLAFLDASYSFIV). The Cytoplasmic portion of the chain corresponds to 78-99 (APRMLVDFLSEKKVISYRGCIT). A disulfide bridge links Cys97 with Cys179. A helical transmembrane segment spans residues 100–120 (QLFFLHFLGGGEGLLLVVMAF). At 121–143 (DRYIAICRPLHCSTVMNPRACYA) the chain is on the extracellular side. Residues 144-164 (MMLALWLGGFVHSIIQVVLIL) traverse the membrane as a helical segment. The Cytoplasmic portion of the chain corresponds to 165-204 (RLPFCGPNQLDNFFCDVRQVIKLACTDMFVVELLMVFNSG). A helical membrane pass occupies residues 205-225 (LMTLLCFLGLLASYAVILCHV). The Extracellular segment spans residues 226–243 (RRAASEGKNKAMSTCTTR). The chain crosses the membrane as a helical span at residues 244–264 (VIIILLMFGPAIFIYICPFRA). At 265–268 (LPAD) the chain is on the cytoplasmic side. The chain crosses the membrane as a helical span at residues 269-289 (KMVSLFHTVIFPLMNPMIYTL). Residues 290-316 (RNQEVKTSMKRLLSRHVVCQVDFIIRN) are Extracellular-facing.

Belongs to the G-protein coupled receptor 1 family.

It is found in the membrane. Its function is as follows. Odorant receptor. The polypeptide is Olfactory receptor 4N4C (Homo sapiens (Human)).